We begin with the raw amino-acid sequence, 508 residues long: Photosystem II CP47 reaction center protein (508 aa).

6 helical membrane passes run Ser-21–Ser-36, Ile-101–Trp-115, Gly-140–Phe-156, Ile-203–Ser-218, Val-237–Val-252, and Ser-457–Arg-472.

This sequence belongs to the PsbB/PsbC family. PsbB subfamily. In terms of assembly, PSII is composed of 1 copy each of membrane proteins PsbA, PsbB, PsbC, PsbD, PsbE, PsbF, PsbH, PsbI, PsbJ, PsbK, PsbL, PsbM, PsbT, PsbX, PsbY, PsbZ, Psb30/Ycf12, at least 3 peripheral proteins of the oxygen-evolving complex and a large number of cofactors. It forms dimeric complexes. Binds multiple chlorophylls. PSII binds additional chlorophylls, carotenoids and specific lipids. is required as a cofactor.

The protein resides in the plastid. It is found in the chloroplast thylakoid membrane. Functionally, one of the components of the core complex of photosystem II (PSII). It binds chlorophyll and helps catalyze the primary light-induced photochemical processes of PSII. PSII is a light-driven water:plastoquinone oxidoreductase, using light energy to abstract electrons from H(2)O, generating O(2) and a proton gradient subsequently used for ATP formation. The polypeptide is Photosystem II CP47 reaction center protein (Aethionema cordifolium (Lebanon stonecress)).